The sequence spans 339 residues: 4-dimethylallyltryptophan N-methyltransferase easF (339 aa).

Belongs to the methyltransferase superfamily. In terms of assembly, homodimer.

It catalyses the reaction 4-(3-methylbut-2-enyl)-L-tryptophan + S-adenosyl-L-methionine = 4-(3-methylbut-2-enyl)-L-abrine + S-adenosyl-L-homocysteine + H(+). The protein operates within alkaloid biosynthesis; ergot alkaloid biosynthesis. Its function is as follows. 4-dimethylallyltryptophan N-methyltransferase; part of the gene cluster that mediates the biosynthesis of fumiclavanine C, a fungal ergot alkaloid. DmaW catalyzes the first step of ergot alkaloid biosynthesis by condensing dimethylallyl diphosphate (DMAP) and tryptophan to form 4-dimethylallyl-L-tryptophan. The second step is catalyzed by the methyltransferase easF that methylates 4-dimethylallyl-L-tryptophan in the presence of S-adenosyl-L-methionine, resulting in the formation of 4-dimethylallyl-L-abrine. The catalase easC and the FAD-dependent oxidoreductase easE then transform 4-dimethylallyl-L-abrine to chanoclavine-I which is further oxidized by EasD in the presence of NAD(+), resulting in the formation of chanoclavine-I aldehyde. EasA reduces chanoclavine-I aldehyde to dihydrochanoclavine-I aldehyde that spontaneously dehydrates to form 6,8-dimethyl-6,7-didehydroergoline. EasG then catalyzes the reduction of 6,8-dimethyl-6,7-didehydroergoline to form festuclavine. Hydrolysis of festuclavine by easM then leads to the formation of fumigaclavine B which is in turn acetylated by easN to fumigaclavine A. Finally, easL catalyzes the conversion of fumigaclavine A into fumigaclavine C by attaching a dimethylallyl moiety to C-2 of the indole nucleus. This chain is 4-dimethylallyltryptophan N-methyltransferase easF, found in Aspergillus fumigatus (strain ATCC MYA-4609 / CBS 101355 / FGSC A1100 / Af293) (Neosartorya fumigata).